A 684-amino-acid chain; its full sequence is Kinesin-like protein KIN-13B (684 aa).

2 disordered regions span residues 1–31 and 71–103; these read MSGR…SNGR and GNEF…SPGL. Composition is skewed to polar residues over residues 18–31 and 79–91; these read LSDN…SNGR and TTPQ…TNQR. The Kinesin motor domain maps to 169-492; that stretch reads KIKVVVRKRP…LRYADRVKSL (324 aa). ATP is bound at residue 258–265; it reads GQTGSGKT. The tract at residues 574–594 is disordered; it reads KPTIQMKSRDMPRPDMKKSNS. Residues 580–594 show a composition bias toward basic and acidic residues; the sequence is KSRDMPRPDMKKSNS. Positions 596–626 form a coiled coil; sequence DNLNALLQEEEDLVNAHRKQVEDTMNIVKEE.

It belongs to the TRAFAC class myosin-kinesin ATPase superfamily. Kinesin family. KIN-13 subfamily.

In terms of biological role, acts redundantly with KIN13A to modulate cell wall synthesis and cell expansion via the THE1 pathway. This is Kinesin-like protein KIN-13B from Arabidopsis thaliana (Mouse-ear cress).